Reading from the N-terminus, the 212-residue chain is Putative protein phosphatase 2C 53 (212 aa).

Positions 1 to 208 constitute a PPM-type phosphatase domain; sequence MEDRFSAITN…DDISVMLIPL (208 aa). D199 is a Mn(2+) binding site.

Belongs to the PP2C family. It depends on Mg(2+) as a cofactor. Mn(2+) is required as a cofactor.

It carries out the reaction O-phospho-L-seryl-[protein] + H2O = L-seryl-[protein] + phosphate. The enzyme catalyses O-phospho-L-threonyl-[protein] + H2O = L-threonyl-[protein] + phosphate. The protein is Putative protein phosphatase 2C 53 of Arabidopsis thaliana (Mouse-ear cress).